The primary structure comprises 396 residues: Alanine racemase (396 aa).

The active-site Proton acceptor; specific for D-alanine is the lysine 46. The residue at position 46 (lysine 46) is an N6-(pyridoxal phosphate)lysine. Arginine 145 is a binding site for substrate. Tyrosine 280 functions as the Proton acceptor; specific for L-alanine in the catalytic mechanism. Residue methionine 328 participates in substrate binding.

This sequence belongs to the alanine racemase family. Pyridoxal 5'-phosphate is required as a cofactor.

It catalyses the reaction L-alanine = D-alanine. It functions in the pathway amino-acid biosynthesis; D-alanine biosynthesis; D-alanine from L-alanine: step 1/1. Functionally, catalyzes the interconversion of L-alanine and D-alanine. May also act on other amino acids. This is Alanine racemase (alr) from Brucella abortus (strain 2308).